We begin with the raw amino-acid sequence, 479 residues long: Sulfate adenylyltransferase subunit 1 (479 aa).

The tr-type G domain maps to 25 to 239; the sequence is KSLLRFLTCG…EVLETVDIQR (215 aa). The segment at 34-41 is G1; that stretch reads GSVDDGKS. 34–41 is a binding site for GTP; it reads GSVDDGKS. The segment at 92 to 96 is G2; sequence GITID. Residues 113–116 form a G3 region; that stretch reads DTPG. GTP-binding positions include 113-117 and 168-171; these read DTPGH and NKMD. The tract at residues 168–171 is G4; that stretch reads NKMD. The tract at residues 206–208 is G5; sequence SAL.

This sequence belongs to the TRAFAC class translation factor GTPase superfamily. Classic translation factor GTPase family. CysN/NodQ subfamily. Heterodimer composed of CysD, the smaller subunit, and CysN.

It catalyses the reaction sulfate + ATP + H(+) = adenosine 5'-phosphosulfate + diphosphate. It functions in the pathway sulfur metabolism; hydrogen sulfide biosynthesis; sulfite from sulfate: step 1/3. In terms of biological role, with CysD forms the ATP sulfurylase (ATPS) that catalyzes the adenylation of sulfate producing adenosine 5'-phosphosulfate (APS) and diphosphate, the first enzymatic step in sulfur assimilation pathway. APS synthesis involves the formation of a high-energy phosphoric-sulfuric acid anhydride bond driven by GTP hydrolysis by CysN coupled to ATP hydrolysis by CysD. In Salmonella choleraesuis (strain SC-B67), this protein is Sulfate adenylyltransferase subunit 1.